A 458-amino-acid chain; its full sequence is Bifunctional protein GlmU (458 aa).

Residues 1–229 (MNKFAIVLAA…FDESLGVNDR (229 aa)) are pyrophosphorylase. Residues 8-11 (LAAG), K22, Q72, and 77-78 (GT) contribute to the UDP-N-acetyl-alpha-D-glucosamine site. D102 provides a ligand contact to Mg(2+). UDP-N-acetyl-alpha-D-glucosamine contacts are provided by G139, E154, N169, and N227. N227 serves as a coordination point for Mg(2+). Positions 230 to 250 (VALSQAELTMRKRINHQHMVN) are linker. Residues 251–458 (GVTLIDPATT…AKKMPHYRGQ (208 aa)) are N-acetyltransferase. Residues R332 and K350 each contribute to the UDP-N-acetyl-alpha-D-glucosamine site. H362 acts as the Proton acceptor in catalysis. 2 residues coordinate UDP-N-acetyl-alpha-D-glucosamine: Y365 and N376. 4 residues coordinate acetyl-CoA: A379, S404, A422, and R439.

The protein in the N-terminal section; belongs to the N-acetylglucosamine-1-phosphate uridyltransferase family. In the C-terminal section; belongs to the transferase hexapeptide repeat family. In terms of assembly, homotrimer. Mg(2+) serves as cofactor.

The protein localises to the cytoplasm. The enzyme catalyses alpha-D-glucosamine 1-phosphate + acetyl-CoA = N-acetyl-alpha-D-glucosamine 1-phosphate + CoA + H(+). It carries out the reaction N-acetyl-alpha-D-glucosamine 1-phosphate + UTP + H(+) = UDP-N-acetyl-alpha-D-glucosamine + diphosphate. Its pathway is nucleotide-sugar biosynthesis; UDP-N-acetyl-alpha-D-glucosamine biosynthesis; N-acetyl-alpha-D-glucosamine 1-phosphate from alpha-D-glucosamine 6-phosphate (route II): step 2/2. It participates in nucleotide-sugar biosynthesis; UDP-N-acetyl-alpha-D-glucosamine biosynthesis; UDP-N-acetyl-alpha-D-glucosamine from N-acetyl-alpha-D-glucosamine 1-phosphate: step 1/1. The protein operates within bacterial outer membrane biogenesis; LPS lipid A biosynthesis. Functionally, catalyzes the last two sequential reactions in the de novo biosynthetic pathway for UDP-N-acetylglucosamine (UDP-GlcNAc). The C-terminal domain catalyzes the transfer of acetyl group from acetyl coenzyme A to glucosamine-1-phosphate (GlcN-1-P) to produce N-acetylglucosamine-1-phosphate (GlcNAc-1-P), which is converted into UDP-GlcNAc by the transfer of uridine 5-monophosphate (from uridine 5-triphosphate), a reaction catalyzed by the N-terminal domain. The chain is Bifunctional protein GlmU from Lactococcus lactis subsp. lactis (strain IL1403) (Streptococcus lactis).